The chain runs to 216 residues: Ras-related protein RABA1a (216 aa).

20 to 27 is a binding site for GTP; sequence GDSGVGKS. The Effector region signature appears at 42 to 50; that stretch reads SKSTIGVEF. GTP-binding positions include 68 to 72, 126 to 129, and 156 to 157; these read DTAGQ, NKCD, and SA. S-geranylgeranyl cysteine attachment occurs at residues Cys213 and Cys214.

The protein belongs to the small GTPase superfamily. Rab family.

The protein resides in the cell membrane. In terms of biological role, involved in auxin-mediated response. May be involved in vesicle trafficking of components involved in polar auxin transport. Binds GTP and GDP and possesses intrinsic GTPase activity. In Arabidopsis thaliana (Mouse-ear cress), this protein is Ras-related protein RABA1a (RABA1A).